Consider the following 179-residue polypeptide: Adenine phosphoribosyltransferase (179 aa).

The protein belongs to the purine/pyrimidine phosphoribosyltransferase family. In terms of assembly, homodimer.

The protein resides in the cytoplasm. The enzyme catalyses AMP + diphosphate = 5-phospho-alpha-D-ribose 1-diphosphate + adenine. Its pathway is purine metabolism; AMP biosynthesis via salvage pathway; AMP from adenine: step 1/1. In terms of biological role, catalyzes a salvage reaction resulting in the formation of AMP, that is energically less costly than de novo synthesis. This chain is Adenine phosphoribosyltransferase, found in Mycolicibacterium gilvum (strain PYR-GCK) (Mycobacterium gilvum (strain PYR-GCK)).